A 179-amino-acid polypeptide reads, in one-letter code: Large ribosomal subunit protein uL6 (179 aa).

This sequence belongs to the universal ribosomal protein uL6 family. As to quaternary structure, part of the 50S ribosomal subunit.

In terms of biological role, this protein binds to the 23S rRNA, and is important in its secondary structure. It is located near the subunit interface in the base of the L7/L12 stalk, and near the tRNA binding site of the peptidyltransferase center. The protein is Large ribosomal subunit protein uL6 of Saccharopolyspora erythraea (strain ATCC 11635 / DSM 40517 / JCM 4748 / NBRC 13426 / NCIMB 8594 / NRRL 2338).